A 209-amino-acid chain; its full sequence is Urease accessory protein UreG (209 aa).

16-23 (GPVGSGKT) serves as a coordination point for GTP.

This sequence belongs to the SIMIBI class G3E GTPase family. UreG subfamily. As to quaternary structure, homodimer. UreD, UreF and UreG form a complex that acts as a GTP-hydrolysis-dependent molecular chaperone, activating the urease apoprotein by helping to assemble the nickel containing metallocenter of UreC. The UreE protein probably delivers the nickel.

The protein resides in the cytoplasm. In terms of biological role, facilitates the functional incorporation of the urease nickel metallocenter. This process requires GTP hydrolysis, probably effectuated by UreG. The chain is Urease accessory protein UreG from Blochmanniella floridana.